The chain runs to 818 residues: uncharacterized protein (818 aa).

3 stretches are compositionally biased toward low complexity: residues 1 to 33 (MYNN…NYIS), 44 to 68 (NNFL…PQQQ), and 97 to 150 (NNSN…TKSN). 5 disordered regions span residues 1 to 68 (MYNN…PQQQ), 92 to 150 (LNTG…TKSN), 164 to 220 (KLDN…KYHE), 284 to 306 (NMNG…NNSD), and 415 to 445 (NINK…NNNN). Composition is skewed to acidic residues over residues 172–190 (SEEE…EEKE) and 205–214 (DNNSQDEDKE). Positions 284–302 (NMNGSSDSSDSSNSSGHSR) are enriched in low complexity. The chain crosses the membrane as a helical span at residues 534 to 554 (IIAIIVIVWPLIANLTYKFIV). Residues 779 to 808 (ANNFMSDSNRSPSSSSSSSSSTSDSENGML) are disordered. Over residues 784–803 (SDSNRSPSSSSSSSSSTSDS) the composition is skewed to low complexity.

It is found in the membrane. This is an uncharacterized protein from Dictyostelium discoideum (Social amoeba).